The primary structure comprises 338 residues: Holliday junction branch migration complex subunit RuvB (338 aa).

The interval 1–180 (MERLLDNKFS…FGIIERLDYY (180 aa)) is large ATPase domain (RuvB-L). Residues Leu19, Arg20, Gly61, Lys64, Thr65, Thr66, Arg170, Tyr180, and Arg217 each contribute to the ATP site. Residue Thr65 participates in Mg(2+) binding. A small ATPAse domain (RuvB-S) region spans residues 181–251 (TVEELSQIVM…VAKSGLEMFE (71 aa)). A head domain (RuvB-H) region spans residues 254–338 (EYGLDLVDRN…FKLKESGDNR (85 aa)). Residues Lys309 and Arg314 each contribute to the DNA site.

Belongs to the RuvB family. In terms of assembly, homohexamer. Forms an RuvA(8)-RuvB(12)-Holliday junction (HJ) complex. HJ DNA is sandwiched between 2 RuvA tetramers; dsDNA enters through RuvA and exits via RuvB. An RuvB hexamer assembles on each DNA strand where it exits the tetramer. Each RuvB hexamer is contacted by two RuvA subunits (via domain III) on 2 adjacent RuvB subunits; this complex drives branch migration. In the full resolvosome a probable DNA-RuvA(4)-RuvB(12)-RuvC(2) complex forms which resolves the HJ.

The protein resides in the cytoplasm. The catalysed reaction is ATP + H2O = ADP + phosphate + H(+). Its function is as follows. The RuvA-RuvB-RuvC complex processes Holliday junction (HJ) DNA during genetic recombination and DNA repair, while the RuvA-RuvB complex plays an important role in the rescue of blocked DNA replication forks via replication fork reversal (RFR). RuvA specifically binds to HJ cruciform DNA, conferring on it an open structure. The RuvB hexamer acts as an ATP-dependent pump, pulling dsDNA into and through the RuvAB complex. RuvB forms 2 homohexamers on either side of HJ DNA bound by 1 or 2 RuvA tetramers; 4 subunits per hexamer contact DNA at a time. Coordinated motions by a converter formed by DNA-disengaged RuvB subunits stimulates ATP hydrolysis and nucleotide exchange. Immobilization of the converter enables RuvB to convert the ATP-contained energy into a lever motion, pulling 2 nucleotides of DNA out of the RuvA tetramer per ATP hydrolyzed, thus driving DNA branch migration. The RuvB motors rotate together with the DNA substrate, which together with the progressing nucleotide cycle form the mechanistic basis for DNA recombination by continuous HJ branch migration. Branch migration allows RuvC to scan DNA until it finds its consensus sequence, where it cleaves and resolves cruciform DNA. The polypeptide is Holliday junction branch migration complex subunit RuvB (Caldicellulosiruptor bescii (strain ATCC BAA-1888 / DSM 6725 / KCTC 15123 / Z-1320) (Anaerocellum thermophilum)).